The sequence spans 214 residues: Charged multivesicular body protein 2b (214 aa).

Residues 25-55 (QRTITRDRAALEKQERQLELEIKKMAKTGNK) adopt a coiled-coil conformation. The tract at residues 179–201 (AKAPSAARGLPSASTSKASTISD) is disordered. The span at 190 to 199 (SASTSKASTI) shows a compositional bias: polar residues. An MIT-interacting motif motif is present at residues 202 to 212 (EEIERQLKALG).

Belongs to the SNF7 family. As to quaternary structure, probable core component of the endosomal sorting required for transport complex III (ESCRT-III). ESCRT-III components are thought to multimerize to form a flat lattice on the perimeter membrane of the endosome.

It is found in the cytoplasm. It localises to the cytosol. The protein resides in the late endosome membrane. Its function is as follows. Probable core component of the endosomal sorting required for transport complex III (ESCRT-III) which is involved in multivesicular bodies (MVBs) formation and sorting of endosomal cargo proteins into MVBs. MVBs contain intraluminal vesicles (ILVs) that are generated by invagination and scission from the limiting membrane of the endosome and mostly are delivered to lysosomes enabling degradation of membrane proteins, such as stimulated growth factor receptors, lysosomal enzymes and lipids. This chain is Charged multivesicular body protein 2b (CHMP2B), found in Gallus gallus (Chicken).